We begin with the raw amino-acid sequence, 414 residues long: DNA primase small subunit PriS (414 aa).

Active-site residues include aspartate 98, aspartate 100, and aspartate 312.

Belongs to the eukaryotic-type primase small subunit family. As to quaternary structure, heterodimer of a small subunit (PriS) and a large subunit (PriL). The cofactor is Mg(2+). It depends on Mn(2+) as a cofactor.

Functionally, catalytic subunit of DNA primase, an RNA polymerase that catalyzes the synthesis of short RNA molecules used as primers for DNA polymerase during DNA replication. The small subunit contains the primase catalytic core and has DNA synthesis activity on its own. Binding to the large subunit stabilizes and modulates the activity, increasing the rate of DNA synthesis while decreasing the length of the DNA fragments, and conferring RNA synthesis capability. The DNA polymerase activity may enable DNA primase to also catalyze primer extension after primer synthesis. May also play a role in DNA repair. The sequence is that of DNA primase small subunit PriS from Methanosarcina barkeri (strain Fusaro / DSM 804).